We begin with the raw amino-acid sequence, 380 residues long: Omega-3 fatty acid desaturase, endoplasmic reticulum (380 aa).

The helical transmembrane segment at 59 to 78 threads the bilayer; sequence VLVVTALAASAISFNSWFFW. A Histidine box-1 motif is present at residues 97–101; that stretch reads HDCGH. Residues 133-137 carry the Histidine box-2 motif; that stretch reads HRTHH. Transmembrane regions (helical) follow at residues 208–231 and 238–256; these read GVVTSTLCWGIVLSVLLYLSLTIG and LYGVPYLIFVMWLDFVTYL. The Histidine box-3 signature appears at 300–304; it reads HVIHH.

It belongs to the fatty acid desaturase type 1 family.

Its subcellular location is the endoplasmic reticulum membrane. Its pathway is lipid metabolism; polyunsaturated fatty acid biosynthesis. Functionally, microsomal (ER) omega-3 fatty acid desaturase introduces the third double bond in the biosynthesis of 18:3 fatty acids, important constituents of plant membranes. It is thought to use cytochrome b5 as an electron donor and to act on fatty acids esterified to phosphatidylcholine and, possibly, other phospholipids. The sequence is that of Omega-3 fatty acid desaturase, endoplasmic reticulum (ARG1) from Vigna radiata var. radiata (Mung bean).